Consider the following 468-residue polypeptide: Aspartate ammonia-lyase (468 aa).

L-aspartate-binding residues include threonine 99, serine 138, threonine 139, asparagine 140, and threonine 185. The tract at residues 315–324 is SS loop; the sequence is GSSIMPGKVN. Serine 316 acts as the Proton acceptor in catalysis. L-aspartate is bound by residues serine 317 and lysine 322.

It belongs to the class-II fumarase/aspartase family. Aspartase subfamily. As to quaternary structure, homotetramer.

It carries out the reaction L-aspartate = fumarate + NH4(+). In terms of biological role, catalyzes the reversible conversion of L-aspartate to fumarate and ammonia. In Helicobacter pylori (strain ATCC 700392 / 26695) (Campylobacter pylori), this protein is Aspartate ammonia-lyase (aspA).